Reading from the N-terminus, the 366-residue chain is MQEIPAILVLENGSVYRGTAFGHAGEATGEVVFNTSLTGYQEILTDPSYTGQMVVMTYPLIGNYGITPNDNESKKIWASALIVREASNVYSNYESTRSLDATLKEAGVMGLAGIDTRKLVREIRQKGAMRAVISTLCDDVAALKAQAAAIPEMTGLDLVQRVTTGERYTVDNPDAKYHVVAFDYGIKTNIIRQLNAEGCKVTVVNAKTTADEVLAMNPDGIFLSNGPGDPFAVTYAIDTIRELAARNSTLPIFGICLGHQLLSLAFGAKTYKLKFGHHGANHPVKNLLSNTIEITSQNHGFAVEMESLPGELELTHKNLYDMTVEGIRHRELPCFSVQYHPEAAPGPHDSHYLFKEFTELMERLKN.

Positions 1 to 174 are CPSase; it reads MQEIPAILVL…GERYTVDNPD (174 aa). L-glutamine-binding residues include serine 48, glycine 226, and glycine 228. One can recognise a Glutamine amidotransferase type-1 domain in the interval 178-366; that stretch reads HVVAFDYGIK…FTELMERLKN (189 aa). The active-site Nucleophile is the cysteine 256. 5 residues coordinate L-glutamine: leucine 257, glutamine 260, asparagine 298, glycine 300, and phenylalanine 301. Catalysis depends on residues histidine 340 and glutamate 342.

This sequence belongs to the CarA family. As to quaternary structure, composed of two chains; the small (or glutamine) chain promotes the hydrolysis of glutamine to ammonia, which is used by the large (or ammonia) chain to synthesize carbamoyl phosphate. Tetramer of heterodimers (alpha,beta)4.

The catalysed reaction is hydrogencarbonate + L-glutamine + 2 ATP + H2O = carbamoyl phosphate + L-glutamate + 2 ADP + phosphate + 2 H(+). The enzyme catalyses L-glutamine + H2O = L-glutamate + NH4(+). It functions in the pathway amino-acid biosynthesis; L-arginine biosynthesis; carbamoyl phosphate from bicarbonate: step 1/1. Its pathway is pyrimidine metabolism; UMP biosynthesis via de novo pathway; (S)-dihydroorotate from bicarbonate: step 1/3. Small subunit of the glutamine-dependent carbamoyl phosphate synthetase (CPSase). CPSase catalyzes the formation of carbamoyl phosphate from the ammonia moiety of glutamine, carbonate, and phosphate donated by ATP, constituting the first step of 2 biosynthetic pathways, one leading to arginine and/or urea and the other to pyrimidine nucleotides. The small subunit (glutamine amidotransferase) binds and cleaves glutamine to supply the large subunit with the substrate ammonia. This chain is Carbamoyl phosphate synthase small chain, found in Chlorobaculum tepidum (strain ATCC 49652 / DSM 12025 / NBRC 103806 / TLS) (Chlorobium tepidum).